Consider the following 448-residue polypeptide: Protein odr-4 homolog (448 aa).

2 helical membrane-spanning segments follow: residues 76–96 and 428–448; these read ASQLGRMLPGGLMVLGVFLMT and GLLISTVVASIAVIISFYYII.

It belongs to the ODR-4 family.

It is found in the membrane. Its function is as follows. May play a role in the trafficking of a subset of G-protein coupled receptors. This Xenopus tropicalis (Western clawed frog) protein is Protein odr-4 homolog (odr4).